The primary structure comprises 557 residues: Phosphomethylpyrimidine synthase (557 aa).

Substrate is bound by residues N197, M226, Y255, H291, 311-313 (SRG), 352-355 (DGLR), and E391. H395 provides a ligand contact to Zn(2+). Y418 contacts substrate. A Zn(2+)-binding site is contributed by H459. [4Fe-4S] cluster is bound by residues C539, C542, and C547.

The protein belongs to the ThiC family. As to quaternary structure, homodimer. Requires [4Fe-4S] cluster as cofactor.

The catalysed reaction is 5-amino-1-(5-phospho-beta-D-ribosyl)imidazole + S-adenosyl-L-methionine = 4-amino-2-methyl-5-(phosphooxymethyl)pyrimidine + CO + 5'-deoxyadenosine + formate + L-methionine + 3 H(+). The protein operates within cofactor biosynthesis; thiamine diphosphate biosynthesis. Functionally, catalyzes the synthesis of the hydroxymethylpyrimidine phosphate (HMP-P) moiety of thiamine from aminoimidazole ribotide (AIR) in a radical S-adenosyl-L-methionine (SAM)-dependent reaction. This is Phosphomethylpyrimidine synthase from Anaplasma phagocytophilum (strain HZ).